A 65-amino-acid polypeptide reads, in one-letter code: Large ribosomal subunit protein bL35 (65 aa).

It belongs to the bacterial ribosomal protein bL35 family.

This Yersinia enterocolitica serotype O:8 / biotype 1B (strain NCTC 13174 / 8081) protein is Large ribosomal subunit protein bL35.